Reading from the N-terminus, the 122-residue chain is UPF0102 protein Atu0303 (122 aa).

Belongs to the UPF0102 family.

This chain is UPF0102 protein Atu0303, found in Agrobacterium fabrum (strain C58 / ATCC 33970) (Agrobacterium tumefaciens (strain C58)).